A 291-amino-acid polypeptide reads, in one-letter code: GTPase Era (291 aa).

The Era-type G domain occupies 2-167 (KSGFVSIIGR…LDEIVKYLDE (166 aa)). Residues 10–17 (GRTNAGKS) are G1. 10 to 17 (GRTNAGKS) lines the GTP pocket. Residues 36–40 (NATRR) form a G2 region. Residues 57–60 (DTPG) are G3. Residues 57–61 (DTPGL) and 116–119 (NKVD) each bind GTP. Positions 116-119 (NKVD) are G4. The tract at residues 146–148 (YSS) is G5. The region spanning 186-274 (YRDFILESIY…LLKLFVTVKK (89 aa)) is the KH type-2 domain.

Belongs to the TRAFAC class TrmE-Era-EngA-EngB-Septin-like GTPase superfamily. Era GTPase family. In terms of assembly, monomer.

It localises to the cytoplasm. The protein localises to the cell inner membrane. Its function is as follows. An essential GTPase that binds both GDP and GTP, with rapid nucleotide exchange. Plays a role in 16S rRNA processing and 30S ribosomal subunit biogenesis and possibly also in cell cycle regulation and energy metabolism. This chain is GTPase Era, found in Campylobacter jejuni subsp. jejuni serotype O:23/36 (strain 81-176).